A 749-amino-acid chain; its full sequence is Serine/threonine-protein phosphatase 4 regulatory subunit 3 (749 aa).

In terms of assembly, regulatory subunit 3 (R3) of the histone H2A phosphatase complex (HTP-C) consisting of PPH3, PSY2 and PSY4.

It localises to the nucleus. Core regulatory subunit of the histone H2A phosphatase complex, which dephosphorylates H2AS128ph (gamma-H2A) that has been displaced from sites of DNA lesions in the double-stranded DNA break repair process. Dephosphorylation is necessary for efficient recovery from the DNA damage checkpoint. This is Serine/threonine-protein phosphatase 4 regulatory subunit 3 (PSY2) from Kluyveromyces lactis (strain ATCC 8585 / CBS 2359 / DSM 70799 / NBRC 1267 / NRRL Y-1140 / WM37) (Yeast).